A 194-amino-acid polypeptide reads, in one-letter code: Peptidyl-tRNA hydrolase (194 aa).

Residue Tyr-16 participates in tRNA binding. The active-site Proton acceptor is the His-21. Phe-67, Asn-69, and Asn-115 together coordinate tRNA.

The protein belongs to the PTH family. In terms of assembly, monomer.

The protein localises to the cytoplasm. It catalyses the reaction an N-acyl-L-alpha-aminoacyl-tRNA + H2O = an N-acyl-L-amino acid + a tRNA + H(+). Hydrolyzes ribosome-free peptidyl-tRNAs (with 1 or more amino acids incorporated), which drop off the ribosome during protein synthesis, or as a result of ribosome stalling. Its function is as follows. Catalyzes the release of premature peptidyl moieties from peptidyl-tRNA molecules trapped in stalled 50S ribosomal subunits, and thus maintains levels of free tRNAs and 50S ribosomes. The polypeptide is Peptidyl-tRNA hydrolase (Escherichia coli O81 (strain ED1a)).